The following is a 418-amino-acid chain: Enolase (418 aa).

Gln-162 contacts (2R)-2-phosphoglycerate. The active-site Proton donor is Glu-204. Asp-241, Glu-283, and Asp-309 together coordinate Mg(2+). Lys-334, Arg-363, Ser-364, and Lys-385 together coordinate (2R)-2-phosphoglycerate. The Proton acceptor role is filled by Lys-334.

Belongs to the enolase family. Mg(2+) is required as a cofactor.

The protein localises to the cytoplasm. Its subcellular location is the secreted. The protein resides in the cell surface. It catalyses the reaction (2R)-2-phosphoglycerate = phosphoenolpyruvate + H2O. It functions in the pathway carbohydrate degradation; glycolysis; pyruvate from D-glyceraldehyde 3-phosphate: step 4/5. Its function is as follows. Catalyzes the reversible conversion of 2-phosphoglycerate (2-PG) into phosphoenolpyruvate (PEP). It is essential for the degradation of carbohydrates via glycolysis. The sequence is that of Enolase from Pelagibacter ubique (strain HTCC1062).